Reading from the N-terminus, the 299-residue chain is Transcription factor MYB17 (299 aa).

HTH myb-type domains follow at residues 9–61 and 62–116; these read KIGL…TNYL and RPDI…KKRL. 2 consecutive DNA-binding regions (H-T-H motif) follow at residues 37–61 and 89–112; these read WRTL…TNYL and WAAI…NTHL.

As to quaternary structure, interacts with LFY. As to expression, expressed in the shoot apex, young flower buds, developing carpels and siliques. Expressed in floral meristem, initiating floral primordia and developing flowers.

The protein localises to the nucleus. Functionally, transcription factor that may play a role in flower development by repressing ANT. Regulates the transition of meristem identity from vegetative growth to flowering. Acts downstream of LFY and upstream of AP1. Directly activates AP1 to promote floral fate. Together with LFY and AP1 may constitute a regulatory network that contributes to an abrupt and robust meristem identity transition. This is Transcription factor MYB17 from Arabidopsis thaliana (Mouse-ear cress).